The chain runs to 113 residues: UPF0482 protein YnfB (113 aa).

An N-terminal signal peptide occupies residues 1 to 28; it reads MKITLSKRIDLLAFLLPCALALSTTVHA.

This sequence belongs to the UPF0482 family.

The polypeptide is UPF0482 protein YnfB (Escherichia coli O157:H7).